The primary structure comprises 685 residues: Sulfate transporter 4.1, chloroplastic (685 aa).

Residues 1–23 (MSYASLSVKDLTSLVSRSGTGSS) constitute a chloroplast transit peptide. Residues 15–26 (VSRSGTGSSSSL) show a composition bias toward low complexity. Positions 15 to 53 (VSRSGTGSSSSLKPPGQTRPVKVIPLQHPDTSNEARPPS) are disordered. Transmembrane regions (helical) follow at residues 97–117 (LDLM…MSYA), 122–142 (LPPI…AIFG), 147–167 (LAIG…GGIA), 175–195 (IELA…MGLL), 203–223 (FISH…IGLS), 255–275 (WPPF…KHVG), 283–303 (FLRA…AKVF), 332–352 (TLLP…VGIA), 369–389 (LFGL…PATG), 406–426 (LSGL…TPMF), 434–454 (LAAI…AIFL), and 473–493 (LFFG…AFVI). One can recognise an STAS domain in the interval 518-642 (QYPEAYTYNG…VRVHDAVQVC (125 aa)).

Belongs to the SLC26A/SulP transporter (TC 2.A.53) family. Expressed both in roots and leaves.

The protein resides in the plastid. It localises to the chloroplast membrane. Functionally, h(+)/sulfate cotransporter that may play a role in the regulation of sulfate assimilation. The chain is Sulfate transporter 4.1, chloroplastic (SULTR4;1) from Arabidopsis thaliana (Mouse-ear cress).